A 245-amino-acid polypeptide reads, in one-letter code: 1-(5-phosphoribosyl)-5-[(5-phosphoribosylamino)methylideneamino] imidazole-4-carboxamide isomerase (245 aa).

D7 (proton acceptor) is an active-site residue. D129 serves as the catalytic Proton donor.

This sequence belongs to the HisA/HisF family.

The protein resides in the cytoplasm. The enzyme catalyses 1-(5-phospho-beta-D-ribosyl)-5-[(5-phospho-beta-D-ribosylamino)methylideneamino]imidazole-4-carboxamide = 5-[(5-phospho-1-deoxy-D-ribulos-1-ylimino)methylamino]-1-(5-phospho-beta-D-ribosyl)imidazole-4-carboxamide. It functions in the pathway amino-acid biosynthesis; L-histidine biosynthesis; L-histidine from 5-phospho-alpha-D-ribose 1-diphosphate: step 4/9. The polypeptide is 1-(5-phosphoribosyl)-5-[(5-phosphoribosylamino)methylideneamino] imidazole-4-carboxamide isomerase (Shigella boydii serotype 4 (strain Sb227)).